A 775-amino-acid polypeptide reads, in one-letter code: Zinc finger protein GLIS3 (775 aa).

Disordered stretches follow at residues 121–147 (TESSHSPYPSPRHSSTRSHSARSKKRA) and 282–314 (PGSTVDLPPAPPLPPLPPPPGPPPPYHAHAHLH). Over residues 123–133 (SSHSPYPSPRH) the composition is skewed to low complexity. A compositionally biased stretch (basic residues) spans 134–147 (SSTRSHSARSKKRA). A compositionally biased stretch (pro residues) spans 289 to 307 (PPAPPLPPLPPPPGPPPPY). The C2H2-type 1 zinc finger occupies 345–370 (HCCRWIDCSALYDQQEELVRHIEKVH). A C2H2-type 2; atypical zinc finger spans residues 379–406 (FTCFWAGCPRRYKPFNARYKLLIHMRVH). C2H2-type zinc fingers lie at residues 412–436 (NKCTFEGCEKAFSRLENLKIHLRSH), 442–466 (YLCQHPGCQKAFSNSSDRAKHQRTH), and 472–496 (YACQIPGCTKRYTDPSSLRKHVKAH). Disordered stretches follow at residues 485 to 512 (DPSSLRKHVKAHSSKEQQARKKLRSSTE) and 529 to 665 (PATS…QPNG). A Bipartite nuclear localization signal motif is present at residues 491–507 (KHVKAHSSKEQQARKKL). Basic and acidic residues predominate over residues 497-512 (SSKEQQARKKLRSSTE). 3 stretches are compositionally biased toward polar residues: residues 557 to 567 (IFSSNYSSRSG), 588 to 600 (VQGSPHNPSSQLP), and 632 to 663 (SILQRTQPPYTQQPSGSHLKSYQPETNSSFQP).

Belongs to the GLI C2H2-type zinc-finger protein family. In terms of tissue distribution, in the adult, expressed at high levels in the kidney and at lower levels in the brain, skeletal muscle, pancreas, liver, lung, thymus and ovary.

Its subcellular location is the nucleus. Its function is as follows. Acts both as a repressor and an activator of transcription. Binds to the consensus sequence 5'-GACCACCCAC-3'. The protein is Zinc finger protein GLIS3 (GLIS3) of Homo sapiens (Human).